The chain runs to 296 residues: GTPase Era (296 aa).

Residues 7-174 enclose the Era-type G domain; the sequence is HCGFVAIVGR…LDQVRPHLPE (168 aa). The interval 15–22 is G1; the sequence is GRPNVGKS. 15–22 is a binding site for GTP; sequence GRPNVGKS. The G2 stretch occupies residues 41-45; it reads QTTRH. Positions 62–65 are G3; sequence DTPG. GTP is bound by residues 62 to 66 and 123 to 126; these read DTPGF and NKLD. The G4 stretch occupies residues 123-126; that stretch reads NKLD. The interval 153–155 is G5; it reads VSA. Positions 205 to 281 constitute a KH type-2 domain; the sequence is LGEELPYEMN…FLQVWVKVKS (77 aa).

The protein belongs to the TRAFAC class TrmE-Era-EngA-EngB-Septin-like GTPase superfamily. Era GTPase family. Monomer.

The protein localises to the cytoplasm. It is found in the cell inner membrane. Functionally, an essential GTPase that binds both GDP and GTP, with rapid nucleotide exchange. Plays a role in 16S rRNA processing and 30S ribosomal subunit biogenesis and possibly also in cell cycle regulation and energy metabolism. This is GTPase Era from Chromobacterium violaceum (strain ATCC 12472 / DSM 30191 / JCM 1249 / CCUG 213 / NBRC 12614 / NCIMB 9131 / NCTC 9757 / MK).